Here is a 611-residue protein sequence, read N- to C-terminus: Protein Spindly (611 aa).

Positions 1–288 (MEESETVLKL…QFQSLQKQHA (288 aa)) form a coiled coil. Residues 499–511 (LKEDSSLSTKEQD) are compositionally biased toward basic and acidic residues. Residues 499-611 (LKEDSSLSTK…PAATTQCPQQ (113 aa)) form a disordered region. A compositionally biased stretch (polar residues) spans 549–567 (RNTNNCSVTSTSPRSASEE). The span at 570–583 (SESKRFDEEQEKRK) shows a compositional bias: basic and acidic residues.

It belongs to the Spindly family.

The protein localises to the chromosome. It is found in the centromere. The protein resides in the kinetochore. Its function is as follows. Required for the localization of dynein and dynactin to the mitotic kintochore. Dynein is believed to control the initial lateral interaction between the kinetochore and spindle microtubules and to facilitate the subsequent formation of end-on kinetochore-microtubule attachments mediated by the NDC80 complex. May act as an adapter protein linking the dynein motor complex to various cargos. The sequence is that of Protein Spindly (spdl1) from Xenopus tropicalis (Western clawed frog).